The primary structure comprises 120 residues: PYEKIGAELVKEVAKKTDDVAGDGTTTATVLAQALVKEGLRNVAAGANPLALKRGIEKAVEKVTETLLKTAKEVETKEQIAATAAISAGDQAIGDLIAEAMDKVGNEGVITVEESNTFGL.

23–27 (DGTTT) contributes to the ATP binding site.

It belongs to the chaperonin (HSP60) family. In terms of assembly, forms a cylinder of 14 subunits composed of two heptameric rings stacked back-to-back. Interacts with the co-chaperonin GroES.

It is found in the cytoplasm. It catalyses the reaction ATP + H2O + a folded polypeptide = ADP + phosphate + an unfolded polypeptide.. In terms of biological role, together with its co-chaperonin GroES, plays an essential role in assisting protein folding. The GroEL-GroES system forms a nano-cage that allows encapsulation of the non-native substrate proteins and provides a physical environment optimized to promote and accelerate protein folding. This Mycobacterium xenopi protein is Chaperonin GroEL.